We begin with the raw amino-acid sequence, 204 residues long: RNA-free ribonuclease P (204 aa).

It belongs to the HARP family.

The catalysed reaction is Endonucleolytic cleavage of RNA, removing 5'-extranucleotides from tRNA precursor.. Functionally, RNA-free RNase P that catalyzes the removal of the 5'-leader sequence from pre-tRNA to produce the mature 5'-terminus. The chain is RNA-free ribonuclease P from Pyrococcus abyssi (strain GE5 / Orsay).